The primary structure comprises 72 residues: Exodeoxyribonuclease 7 small subunit (72 aa).

This sequence belongs to the XseB family. As to quaternary structure, heterooligomer composed of large and small subunits.

It localises to the cytoplasm. The enzyme catalyses Exonucleolytic cleavage in either 5'- to 3'- or 3'- to 5'-direction to yield nucleoside 5'-phosphates.. In terms of biological role, bidirectionally degrades single-stranded DNA into large acid-insoluble oligonucleotides, which are then degraded further into small acid-soluble oligonucleotides. The sequence is that of Exodeoxyribonuclease 7 small subunit from Chlamydia trachomatis serovar L2 (strain ATCC VR-902B / DSM 19102 / 434/Bu).